A 197-amino-acid chain; its full sequence is V-type ATP synthase subunit E 2 (197 aa).

It belongs to the V-ATPase E subunit family.

In terms of biological role, produces ATP from ADP in the presence of a proton gradient across the membrane. This is V-type ATP synthase subunit E 2 from Clostridium tetani (strain Massachusetts / E88).